A 345-amino-acid chain; its full sequence is Nuclear hormone receptor family nhr-176 (345 aa).

Residues 7-82 (IQPCLVCGQS…AGMLEKMVFS (76 aa)) constitute a DNA-binding region (nuclear receptor). The segment at 10 to 30 (CLVCGQSSNSILFGAPSCRAC) adopts an NR C4-type zinc-finger fold. An NR C4-type; degenerate zinc finger spans residues 46–65 (NNCLGECSFAKKSMKPCQSC). In terms of domain architecture, NR LBD spans 92 to 342 (FEKSILEELE…CPLYAISTNS (251 aa)). The segment at 331–342 (SGCPLYAISTNS) is AF-2.

It is found in the nucleus. Nuclear hormone receptor. Binds to xenobiotic ligand thiabendazole (TBZ), in vitro. Involved in the up-regulation of phase I detoxification genes, such as probable cytochrome P450 cyp-35d1, in response to TBZ. This Caenorhabditis elegans protein is Nuclear hormone receptor family nhr-176.